Consider the following 626-residue polypeptide: ATP-dependent zinc metalloprotease FtsH 3 (626 aa).

Residues 1–7 (MNKLFRS) lie on the Cytoplasmic side of the membrane. A helical transmembrane segment spans residues 8 to 28 (LAFYMLILVISVAIAVQLGGT). Residues 29–103 (SQQTTQLVYS…LDFRQDNTSG (75 aa)) lie on the Extracellular side of the membrane. A helical membrane pass occupies residues 104–124 (IWAMLLQTLVPVVLVLLAFFF). Residues 125–626 (IMQQTQGSGN…GGTSQVAPAF (502 aa)) are Cytoplasmic-facing. 197–204 (GPPGTGKT) contributes to the ATP binding site. Zn(2+) is bound at residue histidine 420. Residue glutamate 421 is part of the active site. The Zn(2+) site is built by histidine 424 and aspartate 496. The segment at 602–626 (PPRPKPEPLKPRMVGGGTSQVAPAF) is disordered.

The protein in the central section; belongs to the AAA ATPase family. It in the C-terminal section; belongs to the peptidase M41 family. In terms of assembly, homohexamer. Zn(2+) serves as cofactor.

It localises to the cell membrane. Acts as a processive, ATP-dependent zinc metallopeptidase for both cytoplasmic and membrane proteins. Plays a role in the quality control of integral membrane proteins. The polypeptide is ATP-dependent zinc metalloprotease FtsH 3 (Symbiobacterium thermophilum (strain DSM 24528 / JCM 14929 / IAM 14863 / T)).